The following is a 246-amino-acid chain: Glutamate/aspartate import permease protein GltJ (246 aa).

The ABC transmembrane type-1 domain occupies 29–230; that stretch reads FQVTIALSIC…LINAFIMLVM (202 aa). A run of 5 helical transmembrane segments spans residues 33–53, 74–94, 104–124, 179–196, and 212–232; these read IALS…FGIL, NVPL…LLPE, LDPN…FTAA, LVKN…DMAA, and FTAI…VMTL.

The protein belongs to the binding-protein-dependent transport system permease family. HisMQ subfamily. The complex is composed of two ATP-binding proteins (GltL), two transmembrane proteins (GltJ and GltK) and a solute-binding protein (GltI).

It is found in the cell inner membrane. Its function is as follows. Part of the ABC transporter complex GltIJKL involved in glutamate and aspartate uptake. Probably responsible for the translocation of the substrate across the membrane. The chain is Glutamate/aspartate import permease protein GltJ (gltJ) from Escherichia coli O6:H1 (strain CFT073 / ATCC 700928 / UPEC).